The chain runs to 71 residues: Omega-conotoxin-like Ac6.4 (71 aa).

The signal sequence occupies residues 1–22 (MKLTCVVIVAVLLLTACQLLTA). Residues 23–45 (DDSRGTQKHRALRSDTKLSMSTR) constitute a propeptide that is removed on maturation. Disulfide bonds link Cys46-Cys61, Cys53-Cys65, and Cys60-Cys70. Cys70 carries the cysteine amide modification.

Belongs to the conotoxin O1 superfamily. Expressed by the venom duct.

It is found in the secreted. Functionally, omega-conotoxins act at presynaptic membranes, they bind and block voltage-gated calcium channels (Cav). The protein is Omega-conotoxin-like Ac6.4 of Conus achatinus (Little frog cone).